The sequence spans 559 residues: Transcription activator of gluconeogenesis ERT1-2 (559 aa).

A DNA-binding region (zn(2)-C6 fungal-type) is located at residues 23–51 (CIHCQRTHLTCDNNRPCERCVARGFADTC). Disordered stretches follow at residues 63 to 159 (DDKE…TPSQ), 231 to 263 (SNSL…TPSA), and 329 to 349 (AGQP…DSPS). 2 stretches are compositionally biased toward low complexity: residues 139–159 (QGPQ…TPSQ) and 231–244 (SNSL…QSPN). Positions 245-260 (THSPHNQDQPTPQAAT) are enriched in polar residues. In terms of domain architecture, PAS spans 440 to 512 (ALLEYQKFIS…ELFSRIAFGD (73 aa)).

It belongs to the ERT1/acuK family.

Its subcellular location is the nucleus. Functionally, transcription factor which regulates nonfermentable carbon utilization. Activator of gluconeogenetic genes. The chain is Transcription activator of gluconeogenesis ERT1-2 (ERT1-2) from Yarrowia lipolytica (strain CLIB 122 / E 150) (Yeast).